The sequence spans 75 residues: Probable protein BRICK1-A (75 aa).

Positions 41–72 (MSCRSRLATLNEKLTALERRIEYIEARVTKGE) form a coiled coil.

The protein belongs to the BRK1 family.

It localises to the cytoplasm. The protein resides in the cytoskeleton. Its function is as follows. Involved in regulation of actin and microtubule organization. Part of a WAVE complex that activates the Arp2/3 complex. The sequence is that of Probable protein BRICK1-A (brk1-a) from Xenopus laevis (African clawed frog).